Here is a 711-residue protein sequence, read N- to C-terminus: Angiogenic factor with G patch and FHA domains 1 (711 aa).

The segment covering 1–19 (MASEAPSPPSPSPPPPASP) has biased composition (pro residues). 4 disordered regions span residues 1 to 23 (MASE…EPEL), 137 to 184 (ALDP…EGPA), 260 to 297 (PYQT…SEDQ), and 311 to 400 (EHSG…EDEE). At Ala2 the chain carries N-acetylalanine. Residues Ser7 and Ser12 each carry the phosphoserine modification. Positions 19–85 (PEPELAQLRR…SKILHCGKNE (67 aa)) form a coiled coil. A compositionally biased stretch (polar residues) spans 167-176 (AVTSDSQESV). The segment covering 270-279 (RERRLKKRRK) has biased composition (basic residues). A compositionally biased stretch (basic and acidic residues) spans 287–297 (NEEKDLSSEDQ). Ser344 is modified (phosphoserine). Acidic residues predominate over residues 361-370 (SESEPEEGEI). Positions 374–391 (QSEKSYDGDSSSGDRETS) are enriched in basic and acidic residues. The region spanning 431-484 (ATIGREKDMEHTVRIPEVAVSKFHAEVYFDHDLQSYVLVDQGSQNGTIVNGKQI) is the FHA domain. Composition is skewed to basic and acidic residues over residues 579-606 (LKNP…RDDA) and 613-623 (EITDSNKGRKM). The segment at 579–623 (LKNPKYKDRAGKRREQVGSEGTFQRDDAPASVHSEITDSNKGRKM) is disordered. Residues 616–662 (DSNKGRKMLEKMGWKRGEGLGKDGGGMKTPIQLQLRRTHAGLGTGKL) enclose the G-patch domain. Lys661 bears the N6-acetyllysine mark. Over residues 690–699 (FTENKPRKET) the composition is skewed to basic and acidic residues. Residues 690–711 (FTENKPRKETPGAVPWVTGTAE) form a disordered region.

Interacts with the secreted angiogenic factor TNFSF12.

The protein resides in the cytoplasm. The protein localises to the secreted. Promotes angiogenesis and the proliferation of endothelial cells. Able to bind to endothelial cells and promote cell proliferation, suggesting that it may act in an autocrine fashion. In Mus musculus (Mouse), this protein is Angiogenic factor with G patch and FHA domains 1 (Aggf1).